We begin with the raw amino-acid sequence, 202 residues long: FMN-dependent NADH:quinone oxidoreductase (202 aa).

Residues S9, 15 to 17 (SVS), 95 to 98 (MYNF), and 139 to 142 (SRGG) contribute to the FMN site.

It belongs to the azoreductase type 1 family. In terms of assembly, homodimer. The cofactor is FMN.

The enzyme catalyses 2 a quinone + NADH + H(+) = 2 a 1,4-benzosemiquinone + NAD(+). It carries out the reaction N,N-dimethyl-1,4-phenylenediamine + anthranilate + 2 NAD(+) = 2-(4-dimethylaminophenyl)diazenylbenzoate + 2 NADH + 2 H(+). In terms of biological role, quinone reductase that provides resistance to thiol-specific stress caused by electrophilic quinones. Also exhibits azoreductase activity. Catalyzes the reductive cleavage of the azo bond in aromatic azo compounds to the corresponding amines. The chain is FMN-dependent NADH:quinone oxidoreductase from Laribacter hongkongensis (strain HLHK9).